The sequence spans 305 residues: Translation initiation factor eIF2B subunit alpha (305 aa).

Lysine 35 is subject to N6-acetyllysine.

It belongs to the eIF-2B alpha/beta/delta subunits family. Component of the translation initiation factor 2B (eIF2B) complex which is a heterodecamer of two sets of five different subunits: alpha, beta, gamma, delta and epsilon. Subunits alpha, beta and delta comprise a regulatory subcomplex and subunits epsilon and gamma comprise a catalytic subcomplex. Within the complex, the hexameric regulatory complex resides at the center, with the two heterodimeric catalytic subcomplexes bound on opposite sides.

The protein resides in the cytoplasm. The protein localises to the cytosol. Activated by the chemical integrated stress response (ISR) inhibitor ISRIB which stimulates guanine nucleotide exchange factor activity for both phosphorylated and unphosphorylated eIF2. Acts as a component of the translation initiation factor 2B (eIF2B) complex, which catalyzes the exchange of GDP for GTP on eukaryotic initiation factor 2 (eIF2) gamma subunit. Its guanine nucleotide exchange factor activity is repressed when bound to eIF2 complex phosphorylated on the alpha subunit, thereby limiting the amount of methionyl-initiator methionine tRNA available to the ribosome and consequently global translation is repressed. In Macaca fascicularis (Crab-eating macaque), this protein is Translation initiation factor eIF2B subunit alpha (EIF2B1).